The primary structure comprises 361 residues: Glyceraldehyde-3-phosphate dehydrogenase, glycosomal (361 aa).

NAD(+)-binding positions include 13–14 (RI), Asp39, Gln92, and Ser135. D-glyceraldehyde 3-phosphate is bound by residues 166–168 (SCT), Thr198, 227–228 (TG), and Arg250. Cys167 (nucleophile) is an active-site residue. An NAD(+)-binding site is contributed by Asn336. A Microbody targeting signal motif is present at residues 359–361 (SKM).

Belongs to the glyceraldehyde-3-phosphate dehydrogenase family. In terms of assembly, homotetramer.

It localises to the glycosome. The catalysed reaction is D-glyceraldehyde 3-phosphate + phosphate + NAD(+) = (2R)-3-phospho-glyceroyl phosphate + NADH + H(+). It functions in the pathway carbohydrate degradation; glycolysis; pyruvate from D-glyceraldehyde 3-phosphate: step 1/5. The chain is Glyceraldehyde-3-phosphate dehydrogenase, glycosomal (GAPG) from Leishmania mexicana.